The following is a 128-amino-acid chain: Azurin (128 aa).

In terms of domain architecture, Plastocyanin-like spans Ala-1–Lys-128. Cys-3 and Cys-26 are disulfide-bonded. Cu cation is bound by residues His-46, Cys-112, His-117, and Met-121.

It localises to the periplasm. Functionally, transfers electrons from cytochrome c551 to cytochrome oxidase. This Pseudomonas aeruginosa protein is Azurin.